An 886-amino-acid polypeptide reads, in one-letter code: Inter-alpha-trypsin inhibitor heavy chain H3 (886 aa).

Residues 1 to 18 form the signal peptide; that stretch reads MWWPYLVLALLSGLEASG. A propeptide spanning residues 19–30 is cleaved from the precursor; the sequence is FPRSPLRLLGKR. The region spanning 26 to 155 is the VIT domain; sequence LLGKRSLPEG…KVTFELTYEE (130 aa). A glycan (N-linked (GlcNAc...) asparagine) is linked at N88. The VWFA domain maps to 279–439; the sequence is PKNIVFVIDI…YNFLETMALE (161 aa). N-linked (GlcNAc...) asparagine glycosylation is present at N577. D646 carries the aspartate 1-(chondroitin 4-sulfate)-ester modification. Residues 647–886 constitute a propeptide that is removed on maturation; that stretch reads PHFIIQVPGK…HTDYIVPSLF (240 aa).

Belongs to the ITIH family. I-alpha-I plasma protease inhibitors are assembled from one or two heavy chains (HC) and one light chain, bikunin. Pre-alpha-inhibitor (P-alpha-I) is composed of ITIH3/HC3 and bikunin. In terms of processing, heavy chains are linked to bikunin via chondroitin 4-sulfate esterified to the alpha-carboxyl of the C-terminal aspartate after propeptide cleavage.

It localises to the secreted. May act as a carrier of hyaluronan in serum or as a binding protein between hyaluronan and other matrix protein, including those on cell surfaces in tissues to regulate the localization, synthesis and degradation of hyaluronan which are essential to cells undergoing biological processes. In Mesocricetus auratus (Golden hamster), this protein is Inter-alpha-trypsin inhibitor heavy chain H3 (ITIH3).